Consider the following 146-residue polypeptide: 3-hydroxyacyl-[acyl-carrier-protein] dehydratase FabZ (146 aa).

His49 is a catalytic residue.

Belongs to the thioester dehydratase family. FabZ subfamily.

Its subcellular location is the cytoplasm. It catalyses the reaction a (3R)-hydroxyacyl-[ACP] = a (2E)-enoyl-[ACP] + H2O. Functionally, involved in unsaturated fatty acids biosynthesis. Catalyzes the dehydration of short chain beta-hydroxyacyl-ACPs and long chain saturated and unsaturated beta-hydroxyacyl-ACPs. This chain is 3-hydroxyacyl-[acyl-carrier-protein] dehydratase FabZ, found in Pseudomonas entomophila (strain L48).